A 126-amino-acid polypeptide reads, in one-letter code: Profilin-2 (126 aa).

Ser2 is subject to Blocked amino end (Ser). Lys104 is modified (N6,N6,N6-trimethyllysine).

The protein belongs to the profilin family. Occurs in many kinds of cells as a complex with monomeric actin in a 1:1 ratio.

It localises to the cytoplasm. Its subcellular location is the cytoskeleton. Its function is as follows. Binds to actin and affects the structure of the cytoskeleton. At high concentrations, profilin prevents the polymerization of actin, whereas it enhances it at low concentrations. By binding to PIP2, it inhibits the formation of IP3 and DG. The polypeptide is Profilin-2 (Acanthamoeba castellanii (Amoeba)).